Consider the following 720-residue polypeptide: MAHLVEGTSIIDGKWQLPILVTDLNIQRSISVLGNLNVGGLMLELVSECDVERDWSDHALWWPEKRRWLQHTRSTLDQNGITAETQLEFTPMHKEARIQLPDMQMIDARVDFSVNSFKATKKLCRDLGIRYSEELSLKRYIPPEDLRRGTSDADNMNGPLSMRPGEESVGPMTLRKAAPIFASQSNLDMRRRGQSPALSQSGHIFNAHEMGTLPRHGTLPRGVSPSPGAYNDTMRRTPIMPSISFSEGLENEQFDDALIHSPRLAPSRDTPVFRPQNYVEKAAINRGWLDSSRSLMEQGIFEGDIILLRFKFMNFFDLNPKYDPVRINQLYEQAKWSILLDEFDHTEEEATLFAALQLQATLQRDSPEPEENNKDDVDILLDELEQNLDAAALNRRSDLTQVPELADYLKYMKPKKLAAFKGFKRAFFSFRDLYLSYHQSSSDVNSAPLGHFSLKGCEVSQDVSVGQQKYHIKLLLPTAEGMIDFILKCDSEHQYARWMAACRLASRGKSMADSSYQQEVESIKNLLKMQSGNGNENGNSNTASRKAAAVKLPNDFNVDEYISSKYVRRARSKQQIQQRVSDAHGNVRQLTATEAKLQYIRAWQALPEHGIHYFIVRFRNARKAELVAVAVNRLAKLNMDNGESLKTWRFANMKKWHVNWEIRHLKIQFEDEDIEFKPLSADCKVVHEFIGGYIFLSMRSKEHSQNLDEELFHKLTGGWA.

Disordered stretches follow at residues 145-170 and 210-236; these read DLRR…ESVG and MGTL…TMRR. The FERM domain occupies 288 to 614; it reads WLDSSRSLME…ALPEHGIHYF (327 aa). In terms of domain architecture, PH spans 402-507; the sequence is VPELADYLKY…WMAACRLASR (106 aa).

Belongs to the kindlin family. Interacts with pat-4/ILK. Probably forms a complex with pat-4 and pat-6. Component of an integrin containing attachment complex, composed of at least pat-2, pat-3, pat-4, pat-6, unc-52, unc-97 and unc-112. Mainly expressed in muscle cells in both embryos and adults.

The protein resides in the cell membrane. Its subcellular location is the cytoplasm. The protein localises to the myofibril. It is found in the sarcomere. It localises to the m line. Component of an integrin containing attachment complex, which is required for muscle development and maintenance. Probable regulator of cell-extracellular matrix adhesion. Required during initial muscle assembly to form dense bodies and M-lines. This chain is Protein unc-112, found in Caenorhabditis elegans.